Consider the following 258-residue polypeptide: NAD kinase (258 aa).

Residue Asp-51 is the Proton acceptor of the active site. NAD(+) contacts are provided by residues 51-52 (DG), Arg-56, 119-120 (ND), Lys-130, Asp-149, 160-165 (TAYSLS), and Ala-184.

The protein belongs to the NAD kinase family. A divalent metal cation is required as a cofactor.

Its subcellular location is the cytoplasm. The catalysed reaction is NAD(+) + ATP = ADP + NADP(+) + H(+). Functionally, involved in the regulation of the intracellular balance of NAD and NADP, and is a key enzyme in the biosynthesis of NADP. Catalyzes specifically the phosphorylation on 2'-hydroxyl of the adenosine moiety of NAD to yield NADP. The protein is NAD kinase of Thermotoga neapolitana (strain ATCC 49049 / DSM 4359 / NBRC 107923 / NS-E).